A 146-amino-acid polypeptide reads, in one-letter code: Globin-2B (146 aa).

The 138-residue stretch at 9–146 (QLTADVKKDL…KLVGVVQAAL (138 aa)) folds into the Globin domain. H101 is a heme b binding site.

It belongs to the globin family. As to quaternary structure, homodimer.

This Anadara trapezia (Sydney cockle) protein is Globin-2B.